The chain runs to 248 residues: Short-chain dehydrogenase/reductase iacG (248 aa).

The NADP(+) site is built by Ile14, Asn35, Lys41, Asp58, Arg120, and Val187.

This sequence belongs to the short-chain dehydrogenases/reductases (SDR) family.

It functions in the pathway secondary metabolite biosynthesis. In terms of biological role, short-chain dehydrogenase/reductase; part of the gene cluster that mediates the biosynthesis of iso-A82775C, a enylepoxycyclohexane and biosynthetic precursor of the chloropestolide anticancer natural products. Within the cluster, the prenyltransferase iacE prenylates siccayne to generate pestalodiol E, using dimethylallyl diphosphate (DMAPP) as cosubstrate. The probable oxidoreductase iacF is then involved in the epoxidation of pestalodiol F to pestalodiol F, which is further converted to pestalofone A by the short-chain dehydrogenase/reductase iacG. Iso-A82775C is subsequently generated from pestalofone A by the short-chain dehydrogenase/reductase iacC. Iso-A82775C is further condensed with maldoxin via a Diels-Alder reaction to produce the anticancer natural products chloropestolides A to E. This chain is Short-chain dehydrogenase/reductase iacG, found in Pestalotiopsis fici (strain W106-1 / CGMCC3.15140).